Here is a 381-residue protein sequence, read N- to C-terminus: Chaperone protein DnaJ (381 aa).

A J domain is found at 5–70; sequence DYYEVLGIER…EKRSAYDQFG (66 aa). The CR-type zinc-finger motif lies at 137-215; it reads GTTVDIRVPR…CHGEGRVRET (79 aa). Residues C150, C153, C167, C170, C189, C192, C203, and C206 each coordinate Zn(2+). CXXCXGXG motif repeat units lie at residues 150–157, 167–174, 189–196, and 203–210; these read CEHCDGDG, CPTCHGQG, CPTCHGAG, and CRKCHGEG.

It belongs to the DnaJ family. As to quaternary structure, homodimer. The cofactor is Zn(2+).

Its subcellular location is the cytoplasm. Its function is as follows. Participates actively in the response to hyperosmotic and heat shock by preventing the aggregation of stress-denatured proteins and by disaggregating proteins, also in an autonomous, DnaK-independent fashion. Unfolded proteins bind initially to DnaJ; upon interaction with the DnaJ-bound protein, DnaK hydrolyzes its bound ATP, resulting in the formation of a stable complex. GrpE releases ADP from DnaK; ATP binding to DnaK triggers the release of the substrate protein, thus completing the reaction cycle. Several rounds of ATP-dependent interactions between DnaJ, DnaK and GrpE are required for fully efficient folding. Also involved, together with DnaK and GrpE, in the DNA replication of plasmids through activation of initiation proteins. The chain is Chaperone protein DnaJ from Chromohalobacter salexigens (strain ATCC BAA-138 / DSM 3043 / CIP 106854 / NCIMB 13768 / 1H11).